The sequence spans 1463 residues: Alpha-agarase (1463 aa).

Residues 1–27 (MITSSKKIVSAMLSTSLWIGVASAAYA) form the signal peptide. A propeptide spanning residues 28 to 684 (ETTNVEAEGY…PSTLSESIFT (657 aa)) is cleaved from the precursor. 2 disordered regions span residues 166 to 191 (VTPE…PGTP) and 512 to 549 (TDDI…PQPG). A compositionally biased stretch (polar residues) spans 518–536 (CANTPSGETANATGCSSSQ). The PA14 domain maps to 534–677 (SSQEGGGTDP…GGTNFVHPST (144 aa)). Residues 701–832 (IIVELESFVF…QWSGDRVRFT (132 aa)) enclose the CBM6 domain.

The protein belongs to the glycosyl hydrolase 96 family. Monomer. The cofactor is Ca(2+).

The enzyme catalyses Endohydrolysis of 1,3-alpha-L-galactosidic linkages in agarose, yielding agarotetraose as the major product.. Its function is as follows. Alpha-agarase. Hydrolyzes agarose, agarohexaose, neoagarohexaose and porphyran. Hydrolysis of porphyran by this enzyme improves its antioxidant activity. Does not hydrolyze kappa-carrageenan, iota-carrageenen or lambda-carrageenan. In Thalassotalea agarivorans (Thalassomonas agarivorans), this protein is Alpha-agarase.